We begin with the raw amino-acid sequence, 210 residues long: 3-hydroxy-3-methylglutaryl-coenzyme A reductase 2 (210 aa).

Catalysis depends on charge relay system residues K21 and D97. Residues 166–186 (LLATIVAGSVLAGELSLMSAI) traverse the membrane as a helical segment. H195 (proton donor) is an active-site residue. N199 is a glycosylation site (N-linked (GlcNAc...) asparagine).

It belongs to the HMG-CoA reductase family.

Its subcellular location is the endoplasmic reticulum membrane. The protein localises to the mitochondrion membrane. The protein resides in the plastid membrane. It catalyses the reaction (R)-mevalonate + 2 NADP(+) + CoA = (3S)-3-hydroxy-3-methylglutaryl-CoA + 2 NADPH + 2 H(+). It participates in metabolic intermediate biosynthesis; (R)-mevalonate biosynthesis; (R)-mevalonate from acetyl-CoA: step 3/3. Functionally, catalyzes the synthesis of mevalonate. The specific precursor of all isoprenoid compounds present in plants. The polypeptide is 3-hydroxy-3-methylglutaryl-coenzyme A reductase 2 (HMGR2) (Hevea brasiliensis (Para rubber tree)).